An 858-amino-acid chain; its full sequence is DNA mismatch repair protein MutS (858 aa).

613 to 620 (GPNMAGKS) contributes to the ATP binding site.

This sequence belongs to the DNA mismatch repair MutS family.

In terms of biological role, this protein is involved in the repair of mismatches in DNA. It is possible that it carries out the mismatch recognition step. This protein has a weak ATPase activity. This chain is DNA mismatch repair protein MutS, found in Dehalococcoides mccartyi (strain ATCC BAA-2100 / JCM 16839 / KCTC 5957 / BAV1).